Here is a 284-residue protein sequence, read N- to C-terminus: Homeobox protein CDX-4 (284 aa).

Disordered stretches follow at residues 15-40 (PGTL…SPMP) and 120-155 (GGGT…SRHS). The segment covering 22–37 (GGDGTAGTGGTGGGGS) has biased composition (gly residues). Positions 173 to 232 (KEKYRVVYTDHQRLELEKEFHCNRYITIQRKSELAVNLGLSERQVKIWFQNRRAKERKMI) form a DNA-binding region, homeobox. A compositionally biased stretch (polar residues) spans 238-253 (QFENSGGSVQSDSDSI). The interval 238–259 (QFENSGGSVQSDSDSISPGELP) is disordered.

Belongs to the Caudal homeobox family.

Its subcellular location is the nucleus. The polypeptide is Homeobox protein CDX-4 (CDX4) (Homo sapiens (Human)).